The chain runs to 478 residues: Aspartyl/glutamyl-tRNA(Asn/Gln) amidotransferase subunit B 1 (478 aa).

The protein belongs to the GatB/GatE family. GatB subfamily. Heterotrimer of A, B and C subunits.

The catalysed reaction is L-glutamyl-tRNA(Gln) + L-glutamine + ATP + H2O = L-glutaminyl-tRNA(Gln) + L-glutamate + ADP + phosphate + H(+). It carries out the reaction L-aspartyl-tRNA(Asn) + L-glutamine + ATP + H2O = L-asparaginyl-tRNA(Asn) + L-glutamate + ADP + phosphate + 2 H(+). In terms of biological role, allows the formation of correctly charged Asn-tRNA(Asn) or Gln-tRNA(Gln) through the transamidation of misacylated Asp-tRNA(Asn) or Glu-tRNA(Gln) in organisms which lack either or both of asparaginyl-tRNA or glutaminyl-tRNA synthetases. The reaction takes place in the presence of glutamine and ATP through an activated phospho-Asp-tRNA(Asn) or phospho-Glu-tRNA(Gln). The protein is Aspartyl/glutamyl-tRNA(Asn/Gln) amidotransferase subunit B 1 of Syntrophus aciditrophicus (strain SB).